A 390-amino-acid chain; its full sequence is Succinate--CoA ligase [ADP-forming] subunit beta (390 aa).

An ATP-grasp domain is found at 9 to 248 (KDILRKFGVT…TSEEDPFEVE (240 aa)). Residues lysine 50, 57–59 (GRG), glutamate 103, methionine 106, and glutamate 111 each bind ATP. Residues asparagine 203 and aspartate 217 each coordinate Mg(2+). Substrate is bound by residues asparagine 268 and 325 to 327 (GIV).

This sequence belongs to the succinate/malate CoA ligase beta subunit family. In terms of assembly, heterotetramer of two alpha and two beta subunits. It depends on Mg(2+) as a cofactor.

The catalysed reaction is succinate + ATP + CoA = succinyl-CoA + ADP + phosphate. It catalyses the reaction GTP + succinate + CoA = succinyl-CoA + GDP + phosphate. It participates in carbohydrate metabolism; tricarboxylic acid cycle; succinate from succinyl-CoA (ligase route): step 1/1. Functionally, succinyl-CoA synthetase functions in the citric acid cycle (TCA), coupling the hydrolysis of succinyl-CoA to the synthesis of either ATP or GTP and thus represents the only step of substrate-level phosphorylation in the TCA. The beta subunit provides nucleotide specificity of the enzyme and binds the substrate succinate, while the binding sites for coenzyme A and phosphate are found in the alpha subunit. The protein is Succinate--CoA ligase [ADP-forming] subunit beta of Chlorobium chlorochromatii (strain CaD3).